Here is a 215-residue protein sequence, read N- to C-terminus: Jasmonate monooxygenase ABM (215 aa).

The ABM domain maps to 2-90 (FAVIFETRPQ…GVLEDYHLRV (89 aa)).

The protein localises to the endoplasmic reticulum. It is found in the secreted. It carries out the reaction jasmonate + NADPH + O2 + H(+) = (1R,2R)-12-hydroxyjasmonate + NADP(+) + H2O. Monooxygenase that converts the endogenous (and likely the host) jasmonate (JA) to its hydroxylated derivative 12-hydroxyjasmonate (12OH-JA), also known as tuberonic acid, a compound that attenuates or disables jasmonate-based host innate immunity and which is essential for proper initiation and elaboration of the blast disease in rice. ABM, together with a polyketide synthase MGG_04775 and the esterase MGG_04774, share the secondary metabolism gene cluster with ABC transporter ABC3, and therefore may also be involved in the synthesis of other important metabolites such as the ABC3 transporter efflux substrate (ATS) and/or additional polyketides. The polypeptide is Jasmonate monooxygenase ABM (Pyricularia oryzae (strain 70-15 / ATCC MYA-4617 / FGSC 8958) (Rice blast fungus)).